The following is a 337-amino-acid chain: Glyceraldehyde-3-phosphate dehydrogenase (337 aa).

NAD(+) is bound by residues 13 to 14 (RI), Asp35, and Arg80. D-glyceraldehyde 3-phosphate contacts are provided by residues 151–153 (SCT), Thr182, 211–212 (TG), and Arg234. Cys152 serves as the catalytic Nucleophile. Residue Asn316 coordinates NAD(+).

It belongs to the glyceraldehyde-3-phosphate dehydrogenase family. In terms of assembly, homotetramer.

The protein localises to the cytoplasm. It catalyses the reaction D-glyceraldehyde 3-phosphate + phosphate + NAD(+) = (2R)-3-phospho-glyceroyl phosphate + NADH + H(+). Its pathway is carbohydrate degradation; glycolysis; pyruvate from D-glyceraldehyde 3-phosphate: step 1/5. In Monascus purpureus (Red mold), this protein is Glyceraldehyde-3-phosphate dehydrogenase (GPD1).